We begin with the raw amino-acid sequence, 209 residues long: Uracil phosphoribosyltransferase (209 aa).

Residues Arg-79, Arg-104, and Asp-131–Ser-139 contribute to the 5-phospho-alpha-D-ribose 1-diphosphate site. Residues Ile-194 and Gly-199–Ala-201 contribute to the uracil site. Asp-200 is a 5-phospho-alpha-D-ribose 1-diphosphate binding site.

This sequence belongs to the UPRTase family. The cofactor is Mg(2+).

The catalysed reaction is UMP + diphosphate = 5-phospho-alpha-D-ribose 1-diphosphate + uracil. Its pathway is pyrimidine metabolism; UMP biosynthesis via salvage pathway; UMP from uracil: step 1/1. With respect to regulation, allosterically activated by GTP. Its function is as follows. Catalyzes the conversion of uracil and 5-phospho-alpha-D-ribose 1-diphosphate (PRPP) to UMP and diphosphate. This is Uracil phosphoribosyltransferase from Symbiobacterium thermophilum (strain DSM 24528 / JCM 14929 / IAM 14863 / T).